The following is a 791-amino-acid chain: Pleckstrin homology domain-containing family H member 3 (791 aa).

Residues 1-18 (MPLPGGLWWLLCCRRGFT) form the signal peptide. Over residues 29–41 (LSGDGDEDEDDET) the composition is skewed to acidic residues. The disordered stretch occupies residues 29-71 (LSGDGDEDEDDETFELRSPSPAGGGRGSLDVTLTQPTRNGPIT). Residue Ser-30 is modified to Phosphoserine. Positions 59 to 71 (VTLTQPTRNGPIT) are enriched in polar residues. The 105-residue stretch at 95 to 199 (DVIVKGWLYR…WGVALREVIA (105 aa)) folds into the PH domain. The region spanning 237-399 (HTSSALYAPL…PSLAEISALS (163 aa)) is the MyTH4 domain. Residues 404 to 755 (LLCTVHCPGA…ANPSPERPCS (352 aa)) enclose the FERM domain. Low complexity predominate over residues 549–559 (PRGPLPLLDRL). 2 disordered regions span residues 549–580 (PRGP…PPPS) and 593–623 (LAKR…GGGS). Residues 594-605 (AKRRAERARRIG) show a composition bias toward basic residues. Arg-636 is subject to Omega-N-methylarginine. Residues 748–791 (PSPERPCSSSGPPSQDLSDTSPPSQHQVLEKPQGQSGCLRQLQD) are disordered. The span at 754-791 (CSSSGPPSQDLSDTSPPSQHQVLEKPQGQSGCLRQLQD) shows a compositional bias: polar residues.

The polypeptide is Pleckstrin homology domain-containing family H member 3 (Plekhh3) (Rattus norvegicus (Rat)).